We begin with the raw amino-acid sequence, 313 residues long: Aspartate carbamoyltransferase catalytic subunit (313 aa).

Residues arginine 59 and threonine 60 each coordinate carbamoyl phosphate. Lysine 87 contacts L-aspartate. Positions 109, 137, and 140 each coordinate carbamoyl phosphate. L-aspartate contacts are provided by arginine 170 and arginine 224. Positions 265 and 266 each coordinate carbamoyl phosphate.

This sequence belongs to the aspartate/ornithine carbamoyltransferase superfamily. ATCase family. Heterododecamer (2C3:3R2) of six catalytic PyrB chains organized as two trimers (C3), and six regulatory PyrI chains organized as three dimers (R2).

It carries out the reaction carbamoyl phosphate + L-aspartate = N-carbamoyl-L-aspartate + phosphate + H(+). Its pathway is pyrimidine metabolism; UMP biosynthesis via de novo pathway; (S)-dihydroorotate from bicarbonate: step 2/3. Its function is as follows. Catalyzes the condensation of carbamoyl phosphate and aspartate to form carbamoyl aspartate and inorganic phosphate, the committed step in the de novo pyrimidine nucleotide biosynthesis pathway. The polypeptide is Aspartate carbamoyltransferase catalytic subunit (Rhizobium meliloti (strain 1021) (Ensifer meliloti)).